A 373-amino-acid chain; its full sequence is Queuine tRNA-ribosyltransferase (373 aa).

The active-site Proton acceptor is the Asp90. Substrate-binding positions include 90 to 94 (DSGGF), Asp144, Gln193, and Gly220. The interval 251–257 (GVGTPED) is RNA binding. The active-site Nucleophile is the Asp270. The segment at 275–279 (TRNAR) is RNA binding; important for wobble base 34 recognition. Residues Cys308, Cys310, Cys313, and His339 each coordinate Zn(2+).

This sequence belongs to the queuine tRNA-ribosyltransferase family. Homodimer. Within each dimer, one monomer is responsible for RNA recognition and catalysis, while the other monomer binds to the replacement base PreQ1. Requires Zn(2+) as cofactor.

The enzyme catalyses 7-aminomethyl-7-carbaguanine + guanosine(34) in tRNA = 7-aminomethyl-7-carbaguanosine(34) in tRNA + guanine. Its pathway is tRNA modification; tRNA-queuosine biosynthesis. Catalyzes the base-exchange of a guanine (G) residue with the queuine precursor 7-aminomethyl-7-deazaguanine (PreQ1) at position 34 (anticodon wobble position) in tRNAs with GU(N) anticodons (tRNA-Asp, -Asn, -His and -Tyr). Catalysis occurs through a double-displacement mechanism. The nucleophile active site attacks the C1' of nucleotide 34 to detach the guanine base from the RNA, forming a covalent enzyme-RNA intermediate. The proton acceptor active site deprotonates the incoming PreQ1, allowing a nucleophilic attack on the C1' of the ribose to form the product. After dissociation, two additional enzymatic reactions on the tRNA convert PreQ1 to queuine (Q), resulting in the hypermodified nucleoside queuosine (7-(((4,5-cis-dihydroxy-2-cyclopenten-1-yl)amino)methyl)-7-deazaguanosine). This chain is Queuine tRNA-ribosyltransferase, found in Campylobacter jejuni (strain RM1221).